Consider the following 413-residue polypeptide: S-adenosylmethionine synthase (413 aa).

His-15 lines the ATP pocket. Asp-17 is a Mg(2+) binding site. Residue Glu-43 participates in K(+) binding. Residues Glu-56 and Gln-100 each coordinate L-methionine. The tract at residues 100 to 110 is flexible loop; that stretch reads QSPDISQGVNE. Residues 171–173, 248–249, Asp-257, 263–264, Ala-280, and Lys-284 contribute to the ATP site; these read DGK, KF, and RK. Asp-257 is a binding site for L-methionine. Lys-288 lines the L-methionine pocket.

Belongs to the AdoMet synthase family. As to quaternary structure, homotetramer; dimer of dimers. Requires Mg(2+) as cofactor. K(+) is required as a cofactor.

It localises to the cytoplasm. The catalysed reaction is L-methionine + ATP + H2O = S-adenosyl-L-methionine + phosphate + diphosphate. Its pathway is amino-acid biosynthesis; S-adenosyl-L-methionine biosynthesis; S-adenosyl-L-methionine from L-methionine: step 1/1. Its function is as follows. Catalyzes the formation of S-adenosylmethionine (AdoMet) from methionine and ATP. The overall synthetic reaction is composed of two sequential steps, AdoMet formation and the subsequent tripolyphosphate hydrolysis which occurs prior to release of AdoMet from the enzyme. The protein is S-adenosylmethionine synthase of Prochlorococcus marinus (strain AS9601).